The chain runs to 467 residues: Glutamate--tRNA ligase 1 (467 aa).

The short motif at Pro-8–Gly-18 is the 'HIGH' region element. The 'KMSKS' region motif lies at Pro-230 to Arg-234. Lys-233 is an ATP binding site.

Belongs to the class-I aminoacyl-tRNA synthetase family. Glutamate--tRNA ligase type 1 subfamily. As to quaternary structure, monomer.

It is found in the cytoplasm. The enzyme catalyses tRNA(Glu) + L-glutamate + ATP = L-glutamyl-tRNA(Glu) + AMP + diphosphate. Its function is as follows. Catalyzes the attachment of glutamate to tRNA(Glu) in a two-step reaction: glutamate is first activated by ATP to form Glu-AMP and then transferred to the acceptor end of tRNA(Glu). The sequence is that of Glutamate--tRNA ligase 1 from Petrotoga mobilis (strain DSM 10674 / SJ95).